The primary structure comprises 182 residues: 7-carboxy-7-deazaguanine synthase (182 aa).

Substrate contacts are provided by residues 12–14 and Arg27; that span reads LQG. A Radical SAM core domain is found at 18 to 182; the sequence is HTGTPAVFIR…LQTHKLIDIR (165 aa). [4Fe-4S] cluster is bound by residues Cys31, Cys35, and Cys38. A Mg(2+)-binding site is contributed by Thr40. Thr68 is a binding site for substrate. S-adenosyl-L-methionine-binding positions include Gly70 and 111–113; that span reads SPK.

The protein belongs to the radical SAM superfamily. 7-carboxy-7-deazaguanine synthase family. As to quaternary structure, homodimer. [4Fe-4S] cluster serves as cofactor. The cofactor is S-adenosyl-L-methionine. Mg(2+) is required as a cofactor.

The catalysed reaction is 6-carboxy-5,6,7,8-tetrahydropterin + H(+) = 7-carboxy-7-deazaguanine + NH4(+). Its pathway is purine metabolism; 7-cyano-7-deazaguanine biosynthesis. Its function is as follows. Catalyzes the complex heterocyclic radical-mediated conversion of 6-carboxy-5,6,7,8-tetrahydropterin (CPH4) to 7-carboxy-7-deazaguanine (CDG), a step common to the biosynthetic pathways of all 7-deazapurine-containing compounds. The sequence is that of 7-carboxy-7-deazaguanine synthase from Bacteroides thetaiotaomicron (strain ATCC 29148 / DSM 2079 / JCM 5827 / CCUG 10774 / NCTC 10582 / VPI-5482 / E50).